The following is an 800-amino-acid chain: Receptor-like protein 47 (800 aa).

Positions 1–31 are cleaved as a signal peptide; it reads MMHSSSVRRMITVKWSLCLIFCLTNSILVSA. The Extracellular portion of the chain corresponds to 32-759; the sequence is KHLCLPDQKD…QDEDKEEEDQ (728 aa). Asn-66 and Asn-102 each carry an N-linked (GlcNAc...) asparagine glycan. LRR repeat units follow at residues 109-131, 133-156, 157-179, 190-213, 214-238, 240-262, 263-288, 294-311, 312-334, 335-358, 360-383, 385-406, 407-430, 431-453, 455-477, 479-500, 502-523, 524-550, 551-574, 621-645, 646-669, 670-693, and 695-718; these read QHLQ…SIGN, KRLK…LGNL, SYLT…SMGN, LSSV…NMSS, LSKL…LFMI, SLIL…NISS, PSNL…IFSP, YLDV…VSLP, SPIE…LRNQ, TSLE…LWSL, ELRY…VIQG, RELL…LLPV, VSMN…ICEL, DNLR…CFEN, HLYV…AISH, LQSF…LINC, DIEF…WLEL, LPNL…SLSF, SRLR…YFVG, FTIY…IGLL, KEVI…LSNL, SNLQ…LGKL, and FLEW…QIQT. The N-linked (GlcNAc...) asparagine glycan is linked to Asn-155. Asn-210 carries an N-linked (GlcNAc...) asparagine glycan. The N-linked (GlcNAc...) asparagine glycan is linked to Asn-259. N-linked (GlcNAc...) asparagine glycosylation is found at Asn-323 and Asn-333. A glycan (N-linked (GlcNAc...) asparagine) is linked at Asn-365. Asn-442, Asn-465, Asn-499, and Asn-514 each carry an N-linked (GlcNAc...) asparagine glycan. N-linked (GlcNAc...) asparagine glycosylation is present at Asn-668. N-linked (GlcNAc...) asparagine glycosylation is present at Asn-700. The helical transmembrane segment at 760-780 threads the bilayer; it reads VFSWIAAAIGYVPGVVCGLTI. The Cytoplasmic segment spans residues 781-800; the sequence is GHILVSHKRDWFMRIVSFFT.

This sequence belongs to the RLP family.

Its subcellular location is the cell membrane. This chain is Receptor-like protein 47, found in Arabidopsis thaliana (Mouse-ear cress).